The sequence spans 673 residues: F-box/LRR-repeat protein 17 (673 aa).

The tract at residues 1–39 (MGHVAPHASKKEHVAPHAAEKDHVAPHASKKEHVAPHAA) is disordered. A compositionally biased stretch (basic and acidic residues) spans 9–39 (SKKEHVAPHAAEKDHVAPHASKKEHVAPHAA). The 48-residue stretch at 291–338 (PLHINQLPSSLLLKIFSNLSLNERCILASLVCKYWRDLCLDSQFWKQL) folds into the F-box domain.

Belongs to the FBXL17 family. As to quaternary structure, part of the SCF (SKP1-CUL1-F-box) E3 ubiquitin-protein ligase complex SCF(FBXL17). Interacts with BTB domain-containing proteins; specifically recognizes and binds a conserved degron of non-consecutive residues present at the interface of BTB dimers of aberrant composition. Expressed in the neuro-ectoderm of embryos.

It localises to the cytoplasm. The protein localises to the nucleus. Functionally, substrate-recognition component of the SCF(FBXL17) E3 ubiquitin ligase complex, a key component of a quality control pathway required to ensure functional dimerization of BTB domain-containing proteins (dimerization quality control, DQC). FBXL17 specifically recognizes and binds a conserved degron of non-consecutive residues present at the interface of BTB dimers of aberrant composition: aberrant BTB dimer are then ubiquitinated by the SCF(FBXL17) complex and degraded by the proteasome. The ability of the SCF(FBXL17) complex to eliminate compromised BTB dimers is required for the differentiation and survival of neural crest and neuronal cells. The protein is F-box/LRR-repeat protein 17 of Xenopus laevis (African clawed frog).